The sequence spans 158 residues: Glutathione peroxidase-like peroxiredoxin gpx1 (158 aa).

Cys-36 serves as the catalytic Cysteine sulfenic acid (-SOH) intermediate. Cys-36 and Cys-82 are joined by a disulfide.

Belongs to the glutathione peroxidase family. As to quaternary structure, monomer.

Its subcellular location is the cytoplasm. It is found in the mitochondrion. The catalysed reaction is a hydroperoxide + [thioredoxin]-dithiol = an alcohol + [thioredoxin]-disulfide + H2O. Glutathione peroxidase-like protein that protects cells during oxidative stress. Has peroxidase activity reducing hydrogen peroxide, alkyl and phospholipid hydroperoxides using preferentially thioredoxin as a reducing power. May act as a scavenger of H(2)O(2). This is Glutathione peroxidase-like peroxiredoxin gpx1 from Schizosaccharomyces pombe (strain 972 / ATCC 24843) (Fission yeast).